The chain runs to 655 residues: A-type voltage-gated potassium channel KCND3 (655 aa).

Over 1–182 (MAAGVAAWLP…FENPHTSTLA (182 aa)) the chain is Cytoplasmic. 2 interaction with KCNIP1 regions span residues 6-21 (AAWLPFARAAAIGWMP) and 70-78 (EKEFFFNED). His104, Cys110, Cys131, and Cys132 together coordinate Zn(2+). Phosphoserine is present on Ser153. The helical transmembrane segment at 183–204 (LVFYYVTGFFIAVSVITNVVET) threads the bilayer. Residues 205-223 (VPCGTVPGSKELPCGERYS) lie on the Extracellular side of the membrane. Residues 224-246 (VAFFCLDTACVMIFTVEYLLRLF) form a helical membrane-spanning segment. Topologically, residues 247 to 253 (AAPSRYR) are cytoplasmic. A helical membrane pass occupies residues 254–277 (FIRSVMSIIDVVAIMPYYIGLVMT). The Extracellular portion of the chain corresponds to 278-283 (NNEDVS). Residues 284 to 306 (GAFVTLRVFRVFRIFKFSRHSQG) traverse the membrane as a helical; Voltage-sensor segment. Residues 307-318 (LRILGYTLKSCA) lie on the Cytoplasmic side of the membrane. The helical transmembrane segment at 319–343 (SELGFLLFSLTMAIIIFATVMFYAE) threads the bilayer. Residues 344–352 (KGSSASKFT) are Extracellular-facing. The helical intramembrane region spans 353–366 (SIPASFWYTIVTMT). K(+)-binding residues include Thr367, Leu368, Gly369, and Tyr370. The short motif at 367–372 (TLGYGD) is the Selectivity filter element. An intramembrane segment occupies 367-374 (TLGYGDMV). The chain crosses the membrane as a helical span at residues 378-400 (IAGKIFGSICSLSGVLVIALPVP). Residues 401 to 655 (VIVSNFSRIY…TSNVVKVSVL (255 aa)) lie on the Cytoplasmic side of the membrane. Thr459 is modified (phosphothreonine). The interval 470 to 487 (SLIESQHHHLLHCLEKTT) is interaction with KCNIP1 and KCNIP2. The mediates dendritic targeting stretch occupies residues 474 to 489 (SQHHHLLHCLEKTTGL). A disordered region spans residues 523-565 (SSMQNYPSTRSPSLSSHSGLTTTCCSRRSKKTTHLPNSNLPAT). A compositionally biased stretch (low complexity) spans 529-548 (PSTRSPSLSSHSGLTTTCCS). Position 569 is a phosphoserine; by CaMK2D (Ser569). Ser585 is subject to Phosphoserine. The tract at residues 616-647 (SIPTPPALTPEGESRPPPASPGPNTNIPSITS) is disordered. The span at 637–647 (GPNTNIPSITS) shows a compositional bias: polar residues.

Belongs to the potassium channel family. D (Shal) (TC 1.A.1.2) subfamily. Kv4.3/KCND3 sub-subfamily. Homotetramer. Heterotetramer with KCND2. Associates with the regulatory subunits KCNIP3 and KCNIP4. Interacts with KCNE1, KCNE2, SCN1B and KCNAB1 and DLG1. Component of heteromultimeric potassium channels. Identified in potassium channel complexes containing KCND1, KCND2, KCND3, KCNIP1, KCNIP2, KCNIP3, KCNIP4, DPP6 and DPP10. Interacts with KCNIP1; each KCNIP1 monomer interacts with two adjacent KCND3 subunits, through both the N-terminal inactivation ball of a KCND3 subunit and a C-terminal helix from the adjacent KCND3 subunit, clamping them together; this interaction stabilizes the tetrameric form and modulates the channel gating kinetics namely channel activation and inactivation kinetics and rate of recovery from inactivation. Interacts with DPP6; this interaction modulates the channel gating kinetics namely channel activation and inactivation kinetics and rate of recovery from inactivation. Interacts with KCNIP2; each KCNIP2 monomer interacts with two adjacent KCND3 subunits, through both the N-terminal inactivation ball of a KCND3 subunit and a C-terminal helix from the adjacent KCND3 subunit, clamping them together; this interaction modulates the channel gating kinetics. In terms of processing, regulated through phosphorylation at Ser-569 by CaMK2D. In terms of tissue distribution, highly expressed in brain, in particular in the retrosplenial cortex, medial habenula, anterior thalamus, hippocampus, cerebellum and lateral geniculate and superior colliculus. Highly expressed in heart atrium (at protein level) and throughout the ventricle wall, in lung and vas deferens.

It is found in the cell membrane. The protein localises to the sarcolemma. The protein resides in the cell projection. Its subcellular location is the dendrite. It catalyses the reaction K(+)(in) = K(+)(out). Pore-forming (alpha) subunit of voltage-gated A-type potassium channels that mediates transmembrane potassium transport in excitable membranes, in brain and heart. In cardiomyocytes, may generate the transient outward potassium current I(To). In neurons, may conduct the transient subthreshold somatodendritic A-type potassium current (ISA). Kinetics properties are characterized by fast activation at subthreshold membrane potentials, rapid inactivation, and quick recovery from inactivation. Channel properties are modulated by interactions with regulatory subunits. Interaction with the regulatory subunits KCNIP1 or KCNIP2 modulates the channel gating kinetics namely channel activation and inactivation kinetics and rate of recovery from inactivation. Likewise, interaction with DPP6 modulates the channel gating kinetics namely channel activation and inactivation kinetics. This chain is A-type voltage-gated potassium channel KCND3, found in Rattus norvegicus (Rat).